We begin with the raw amino-acid sequence, 275 residues long: Fructose permease IID component (275 aa).

The 270-residue stretch at 5 to 274 (KRLTKKEIFS…GILGYWAGFL (270 aa)) folds into the PTS EIID domain. 5 helical membrane-spanning segments follow: residues 100 to 120 (MKIG…WGTI), 127 to 147 (LGAS…FFLL), 187 to 207 (ILGL…NIPI), 227 to 247 (VLDS…VAWM), and 255 to 275 (LLII…GFLA).

It is found in the cell membrane. The phosphoenolpyruvate-dependent sugar phosphotransferase system (PTS), a major carbohydrate active -transport system, catalyzes the phosphorylation of incoming sugar substrates concomitant with their translocation across the cell membrane. This system is involved in fructose transport. In Bacillus subtilis (strain 168), this protein is Fructose permease IID component (levG).